Consider the following 509-residue polypeptide: Ribonuclease Y (509 aa).

A helical membrane pass occupies residues 5–25 (IIILLSVFCGIFFICFIICSS). The KH domain occupies 199-259 (TTNIVKLPSD…IRREIATRTL (61 aa)). The HD domain occupies 325-418 (VLAHSIEVAK…VAIADSISAS (94 aa)).

This sequence belongs to the RNase Y family.

It is found in the cell membrane. Functionally, endoribonuclease that initiates mRNA decay. The polypeptide is Ribonuclease Y (Mycoplasma capricolum subsp. capricolum (strain California kid / ATCC 27343 / NCTC 10154)).